The following is a 342-amino-acid chain: Elongation factor Ts (342 aa).

Residues 79 to 82 are involved in Mg(2+) ion dislocation from EF-Tu; the sequence is TDFV.

This sequence belongs to the EF-Ts family.

The protein localises to the cytoplasm. In terms of biological role, associates with the EF-Tu.GDP complex and induces the exchange of GDP to GTP. It remains bound to the aminoacyl-tRNA.EF-Tu.GTP complex up to the GTP hydrolysis stage on the ribosome. The polypeptide is Elongation factor Ts (tsf) (Lactococcus lactis subsp. lactis (strain IL1403) (Streptococcus lactis)).